The primary structure comprises 574 residues: Protein OBERON 2 (574 aa).

Polar residues-rich tracts occupy residues 1 to 10 and 65 to 76; these read MGTSSGSNHP and SMSQKTEPDSME. A disordered region spans residues 1–76; it reads MGTSSGSNHP…SQKTEPDSME (76 aa). The segment at 226–291 adopts a PHD-type zinc-finger fold; that stretch reads LCMCTICNKF…VFKCRACNRT (66 aa). The stretch at 416 to 524 forms a coiled coil; it reads KKARMALETC…LFEKIKLQEN (109 aa).

As to quaternary structure, self-interacts. Interacts with OBE1, OBE3 and OBE4. Binds to VPg of pea seed borne mosaic virus (PSbMV), turnip mosaic virus (TuMV) and lettuce mosaic virus (LMV), but not with VPg of tobacco etch virus (TEV), cowpea mosaic virus (CPMV), tomato black ring virus (TBRV) and grapevine fan leaf virus (GFLV). Expressed in roots, seedlings, stems, leaves, flowers and siliques, especially in the vasculature.

It is found in the nucleus. In terms of biological role, probable transcription factor that acts together with OBE1 for the maintenance and/or establishment of both the shoot and root meristems, probably by controlling the expression of the meristem genes such as WUS, PLT1 and PLT2 and of genes required for auxin responses. Promotes cell meristematic activity via the WUSCHEL-CLAVATA pathway. Involved in the development of the basal pole and in auxin-mediated root and vascular development in the embryo. Confers sensitivity to turnip mosaic virus (TuMV) probably by promoting viral movement and multiplication via interaction with TuMV VPg. This chain is Protein OBERON 2, found in Arabidopsis thaliana (Mouse-ear cress).